A 423-amino-acid chain; its full sequence is Elongation factor 1-alpha (423 aa).

The tr-type G domain occupies 5-221 (KEHINVAFIG…DLLKPPEKLV (217 aa)). The interval 14–21 (GHVDHGKS) is G1. 14 to 21 (GHVDHGKS) is a GTP binding site. Ser21 contacts Mg(2+). The G2 stretch occupies residues 70 to 74 (GVTID). Positions 91 to 94 (DCPG) are G3. Residues 91 to 95 (DCPGH) and 146 to 149 (NKMD) each bind GTP. The interval 146–149 (NKMD) is G4. The interval 185–187 (SAY) is G5.

It belongs to the TRAFAC class translation factor GTPase superfamily. Classic translation factor GTPase family. EF-Tu/EF-1A subfamily.

Its subcellular location is the cytoplasm. The catalysed reaction is GTP + H2O = GDP + phosphate + H(+). Its function is as follows. GTP hydrolase that promotes the GTP-dependent binding of aminoacyl-tRNA to the A-site of ribosomes during protein biosynthesis. The polypeptide is Elongation factor 1-alpha (Archaeoglobus fulgidus (strain ATCC 49558 / DSM 4304 / JCM 9628 / NBRC 100126 / VC-16)).